Here is a 1051-residue protein sequence, read N- to C-terminus: MKETPKKVLVIGSGPIKIAEAAEFDYSGSQALKALKEEGIETVLVNSNVATVQTSKKFADKLYMLPVVWWAVEKVIEKERPDGIMIGFGGQTALNVGVDLHKKGVLQKYGVKVLGTQIDGIEKALSREKFRETMIENNLPVPPSLSARSEEEAIKNAKIVGYPVMVRVSFNLGGRGSMVAWTEEDLKKNIRRALSQSYIGEVLIEKYLYHWIELEYEVMRDKKGNSSVIACIENLDPMGVHTGESTVVAPCQTLDNLEYQNMRTYTIEVARSINLIGECNVQFALNPRGYEYYIIETNPRMSRSSALASKATGYPLAYVSAKLALGYELHEVINKVSGRTCACFEPSLDYIVTKIPRWDLSKFENVDQSLATEMMSVGEVMSIGRSFEESLQKAVRMLDIGEPGVVGGKIYEAKMSKVEALKYLKERRPYWFLYVAKAFKEGATIDEVYEVTGISKFFLNKIKGLVDFYETLKILKEIDEETLKLAKKLGFSDEQISKALNKSTQYVRKIRDQSNIIPVVKLIDTLAGEWPSVTNYMYLTYNGTEDDLEFSQGNKLLIVGAGGFRIGVSVEFDWSVVSLMEAASKYFDEVAVLNYNPETVSTDWDIARKLYFDEINVERVLDLIKKEKFRYVATFSGGQIGNSIAKELEENGVRLLGTSGSSVDIAENREKFSKLLDKLGISQPNWVSATSLEEIKKFVNEVGFPVLVRPSYVLSGSSMKIAYSEEELYEYVRRATEISPKYPVVISKYIENAIEAEVDGVSDGNRVLGITLEHVEEAGVHSGDATMSIPFRKLSENSVNKMRENVLSLARELNIKGPFNVQFVVKDNTPHIIELNLRASRSMPFSSKAKGINLINEAMKAIFNGLDFSEDYYEPPSKYWAVKSPQFSWSQLRGTYPFLGPEMKSTGEAASFGVTFYDALLKSWLSSIPNRIPNKNGIALVYGDKNLDYLKDTAVNLVKFGLTVYSISELPLQGIETIDKTKAEELVRAKKVEIVVTDGYLKKFDYNIRRTAVDYNIPVILNGRLGYEVSKAFLDYDSLTFFEISEYGGGI.

Positions 1–399 (MKETPKKVLV…SLQKAVRMLD (399 aa)) are carboxyphosphate synthetic domain. Residues Arg-127, Arg-167, Gly-173, Gly-174, Lys-206, Leu-208, Glu-213, Gly-239, Val-240, His-241, Gln-282, and Glu-296 each coordinate ATP. In terms of domain architecture, ATP-grasp 1 spans 131–325 (RETMIENNLP…LAYVSAKLAL (195 aa)). The Mg(2+) site is built by Gln-282, Glu-296, and Asn-298. Residues Gln-282, Glu-296, and Asn-298 each contribute to the Mn(2+) site. Positions 400 to 548 (IGEPGVVGGK…LTYNGTEDDL (149 aa)) are oligomerization domain. The interval 549–930 (EFSQGNKLLI…LKSWLSSIPN (382 aa)) is carbamoyl phosphate synthetic domain. The 191-residue stretch at 673-863 (SKLLDKLGIS…LINEAMKAIF (191 aa)) folds into the ATP-grasp 2 domain. Arg-709, Lys-748, Ile-750, Glu-755, Gly-779, Val-780, His-781, Ser-782, Gln-822, and Glu-834 together coordinate ATP. The Mg(2+) site is built by Gln-822, Glu-834, and Asn-836. Gln-822, Glu-834, and Asn-836 together coordinate Mn(2+). The 122-residue stretch at 930–1051 (NRIPNKNGIA…FEISEYGGGI (122 aa)) folds into the MGS-like domain. Positions 931–1051 (RIPNKNGIAL…FEISEYGGGI (121 aa)) are allosteric domain.

It belongs to the CarB family. Composed of two chains; the small (or glutamine) chain promotes the hydrolysis of glutamine to ammonia, which is used by the large (or ammonia) chain to synthesize carbamoyl phosphate. Tetramer of heterodimers (alpha,beta)4. Mg(2+) serves as cofactor. The cofactor is Mn(2+).

It catalyses the reaction hydrogencarbonate + L-glutamine + 2 ATP + H2O = carbamoyl phosphate + L-glutamate + 2 ADP + phosphate + 2 H(+). The catalysed reaction is hydrogencarbonate + NH4(+) + 2 ATP = carbamoyl phosphate + 2 ADP + phosphate + 2 H(+). It functions in the pathway amino-acid biosynthesis; L-arginine biosynthesis; carbamoyl phosphate from bicarbonate: step 1/1. Its pathway is pyrimidine metabolism; UMP biosynthesis via de novo pathway; (S)-dihydroorotate from bicarbonate: step 1/3. Its function is as follows. Large subunit of the glutamine-dependent carbamoyl phosphate synthetase (CPSase). CPSase catalyzes the formation of carbamoyl phosphate from the ammonia moiety of glutamine, carbonate, and phosphate donated by ATP, constituting the first step of 2 biosynthetic pathways, one leading to arginine and/or urea and the other to pyrimidine nucleotides. The large subunit (synthetase) binds the substrates ammonia (free or transferred from glutamine from the small subunit), hydrogencarbonate and ATP and carries out an ATP-coupled ligase reaction, activating hydrogencarbonate by forming carboxy phosphate which reacts with ammonia to form carbamoyl phosphate. The polypeptide is Carbamoyl phosphate synthase large chain (Saccharolobus islandicus (strain L.S.2.15 / Lassen #1) (Sulfolobus islandicus)).